The sequence spans 393 residues: Probable xylan O-acetyltransferase 11 (393 aa).

The Cytoplasmic portion of the chain corresponds to 1 to 9; the sequence is MHQPAIMQR. A helical; Signal-anchor for type II membrane protein membrane pass occupies residues 10 to 26; it reads ALAVVALLAAAAAIAAA. At 27 to 393 the chain is on the lumenal side; that stretch reads QGESPELLPF…LFFPARDEAI (367 aa). Disulfide bonds link cysteine 45/cysteine 96, cysteine 67/cysteine 132, cysteine 76/cysteine 368, and cysteine 283/cysteine 364. The N-linked (GlcNAc...) asparagine glycan is linked to asparagine 102. The GDS motif signature appears at 119-121; that stretch reads GDS. Residue serine 121 is the Nucleophile of the active site. The N-linked (GlcNAc...) asparagine glycan is linked to asparagine 325. Catalysis depends on aspartate 363, which acts as the Proton donor. Positions 363–366 match the DXXH motif motif; sequence DCTH. Residue histidine 366 is the Proton acceptor of the active site.

Belongs to the PC-esterase family. TBL subfamily. As to expression, expressed in roots, leaves and stems.

It localises to the golgi apparatus membrane. In terms of biological role, probable xylan acetyltransferase required for 2-O- and 3-O-monoacetylation of xylosyl residues in xylan. Possesses extremely low activity in vitro. The protein is Probable xylan O-acetyltransferase 11 of Oryza sativa subsp. japonica (Rice).